Here is a 396-residue protein sequence, read N- to C-terminus: Aspartic protease 1 (396 aa).

The N-terminal stretch at 1 to 15 (MQTFVLLALVAACSA) is a signal peptide. Residues 68-389 (YLGNITLGTP…DIGNGQIGFA (322 aa)) form the Peptidase A1 domain. Residue Asn-71 is glycosylated (N-linked (GlcNAc...) asparagine). Asp-86 is an active-site residue. Cysteines 99 and 104 form a disulfide. Asp-278 is a catalytic residue. A disulfide bridge connects residues Cys-313 and Cys-349.

Belongs to the peptidase A1 family. In terms of assembly, interacts with B.thuringiensis endotoxin Cry6Aa; the interaction prevents Cry6Aa proteolysis by host gut proteases.

The protein resides in the cytoplasm. The protein localises to the lysosome. Its subcellular location is the secreted. Its function is as follows. Aspartic protease, which is part of the necrosis cell death pathway. Promotes B.thuringiensis Cry6Aa stability by preventing its proteolysis by host gut proteases. Required for Cry6Aa-induced necrotic death of intestinal cells. Cry6Aa uptake into the host intestinal cells triggers an increase in intracellular Ca(2+) levels leading to lysosome rupture and to the subsequent release of asp-1 which leads to necrosis. The chain is Aspartic protease 1 from Caenorhabditis elegans.